The sequence spans 154 residues: Protein FasC (154 aa).

Belongs to the periplasmic pilus chaperone family.

Functionally, could be required for the biogenesis of a putative fimbria. The chain is Protein FasC (fasC) from Escherichia coli.